The following is a 250-amino-acid chain: 3-deoxy-manno-octulosonate cytidylyltransferase (250 aa).

Belongs to the KdsB family.

The protein localises to the cytoplasm. It carries out the reaction 3-deoxy-alpha-D-manno-oct-2-ulosonate + CTP = CMP-3-deoxy-beta-D-manno-octulosonate + diphosphate. It participates in nucleotide-sugar biosynthesis; CMP-3-deoxy-D-manno-octulosonate biosynthesis; CMP-3-deoxy-D-manno-octulosonate from 3-deoxy-D-manno-octulosonate and CTP: step 1/1. The protein operates within bacterial outer membrane biogenesis; lipopolysaccharide biosynthesis. Its function is as follows. Activates KDO (a required 8-carbon sugar) for incorporation into bacterial lipopolysaccharide in Gram-negative bacteria. This is 3-deoxy-manno-octulosonate cytidylyltransferase from Syntrophobacter fumaroxidans (strain DSM 10017 / MPOB).